The following is a 544-amino-acid chain: Cytochrome P450 82A1 (544 aa).

C481 is a binding site for heme.

The protein belongs to the cytochrome P450 family. Requires heme as cofactor.

The protein resides in the membrane. This chain is Cytochrome P450 82A1 (CYP82A1), found in Pisum sativum (Garden pea).